A 391-amino-acid polypeptide reads, in one-letter code: Extracellular metalloproteinase 3 (391 aa).

The propeptide occupies 1–9 (HNVVDYVAS). Residue Asn-173 is glycosylated (N-linked (GlcNAc...) asparagine). Zn(2+) is bound at residue His-192. The active site involves Glu-193. His-196 is a Zn(2+) binding site. 2 N-linked (GlcNAc...) asparagine glycosylation sites follow: Asn-243 and Asn-385.

Belongs to the peptidase M36 family. Zn(2+) is required as a cofactor.

The protein localises to the secreted. Secreted metalloproteinase probably acting as a virulence factor. This chain is Extracellular metalloproteinase 3 (MEP3), found in Trichophyton soudanense.